Reading from the N-terminus, the 156-residue chain is Ribosomal RNA large subunit methyltransferase H (156 aa).

Residues Leu-73, Gly-104, and 123–128 contribute to the S-adenosyl-L-methionine site; that span reads LSDLTL.

This sequence belongs to the RNA methyltransferase RlmH family. As to quaternary structure, homodimer.

Its subcellular location is the cytoplasm. It carries out the reaction pseudouridine(1915) in 23S rRNA + S-adenosyl-L-methionine = N(3)-methylpseudouridine(1915) in 23S rRNA + S-adenosyl-L-homocysteine + H(+). Specifically methylates the pseudouridine at position 1915 (m3Psi1915) in 23S rRNA. The protein is Ribosomal RNA large subunit methyltransferase H of Methylibium petroleiphilum (strain ATCC BAA-1232 / LMG 22953 / PM1).